Reading from the N-terminus, the 260-residue chain is uncharacterized protein (260 aa).

The Radical SAM core domain maps to 6–239; it reads AGVRSGVVVS…VAVAETYLPN (234 aa).

This is an uncharacterized protein from Sinorhizobium fredii (strain NBRC 101917 / NGR234).